The sequence spans 245 residues: Adenosylcobinamide-GDP ribazoletransferase (245 aa).

5 helical membrane passes run 31 to 51 (FGRA…VLYA), 61 to 81 (PLLQ…ALHL), 113 to 133 (VAVV…AALL), 138 to 158 (AGLL…LFLT), and 192 to 212 (LAFG…FAWL).

The protein belongs to the CobS family. Mg(2+) serves as cofactor.

It localises to the cell inner membrane. The enzyme catalyses alpha-ribazole + adenosylcob(III)inamide-GDP = adenosylcob(III)alamin + GMP + H(+). The catalysed reaction is alpha-ribazole 5'-phosphate + adenosylcob(III)inamide-GDP = adenosylcob(III)alamin 5'-phosphate + GMP + H(+). The protein operates within cofactor biosynthesis; adenosylcobalamin biosynthesis; adenosylcobalamin from cob(II)yrinate a,c-diamide: step 7/7. Functionally, joins adenosylcobinamide-GDP and alpha-ribazole to generate adenosylcobalamin (Ado-cobalamin). Also synthesizes adenosylcobalamin 5'-phosphate from adenosylcobinamide-GDP and alpha-ribazole 5'-phosphate. The chain is Adenosylcobinamide-GDP ribazoletransferase from Pseudomonas aeruginosa (strain ATCC 15692 / DSM 22644 / CIP 104116 / JCM 14847 / LMG 12228 / 1C / PRS 101 / PAO1).